Reading from the N-terminus, the 214-residue chain is UPF0758 protein (214 aa).

One can recognise an MPN domain in the interval 92–214; that stretch reads VLSSWQALLD…ELSFRAEGLL (123 aa). Zn(2+) is bound by residues H163, H165, and D176. The short motif at 163-176 is the JAMM motif element; the sequence is HNHPSGDPTPSQAD.

It belongs to the UPF0758 family.

This Rhodobacter capsulatus (Rhodopseudomonas capsulata) protein is UPF0758 protein.